A 216-amino-acid chain; its full sequence is Somatotropin (216 aa).

Positions 1 to 26 (MAAGPRTSMLLAFALLCLPWTQEVGA) are cleaved as a signal peptide. His45 is a binding site for Zn(2+). A disulfide bridge links Cys78 with Cys189. At Ser131 the chain carries Phosphoserine. Residue Glu198 participates in Zn(2+) binding. An intrachain disulfide couples Cys206 to Cys214.

It belongs to the somatotropin/prolactin family.

It is found in the secreted. Its function is as follows. Plays an important role in growth control. Its major role in stimulating body growth is to stimulate the liver and other tissues to secrete IGF1. It stimulates both the differentiation and proliferation of myoblasts. It also stimulates amino acid uptake and protein synthesis in muscle and other tissues. This Balaenoptera physalus (Fin whale) protein is Somatotropin (GH1).